The chain runs to 242 residues: DNA repair protein RecO (242 aa).

It belongs to the RecO family.

Its function is as follows. Involved in DNA repair and RecF pathway recombination. The sequence is that of DNA repair protein RecO from Nitrosospira multiformis (strain ATCC 25196 / NCIMB 11849 / C 71).